Reading from the N-terminus, the 118-residue chain is Mitochondrial protein YPR099C (118 aa).

It localises to the mitochondrion. Its function is as follows. Essential for the functional mitochondria and respiratory growth. This chain is Mitochondrial protein YPR099C, found in Saccharomyces cerevisiae (strain ATCC 204508 / S288c) (Baker's yeast).